The primary structure comprises 90 residues: Small ribosomal subunit protein uS15c (90 aa).

The protein belongs to the universal ribosomal protein uS15 family. Part of the 30S ribosomal subunit.

The protein resides in the plastid. The protein localises to the chloroplast. This Panax ginseng (Korean ginseng) protein is Small ribosomal subunit protein uS15c (rps15).